Consider the following 401-residue polypeptide: MKEKIVLAYSGGLDTSVAVQWLIDKGYDVVACCLDVGEGKDLDEVYQKALDMGAIECYIIDATEEFSDEYVSYAIKGNLMYENTYPVVSALSRPLISKKLVEIAEKTDAVGIAHGCTGKGNDQVRFEVAIKALNPELKVFAPVRAWGWSREEEIDYAIQHNIPVPINHDSPYSIDQNLWGRANECGILEDPYAAPPADAFDLTREIEDTPDTPDEIVIHFEKGLPVSIDDKAFPLDELILYLNDLAGKHGIGRIDHVENRLVGIKSREIYETPGAEVILKAHKALETITLTKDVAHFKPVIEKQFAEQTYNGLWFSPLTDSLKLFIDSTQEHVTGDVRVKLFKGNATVNGRRSPYSLYNEKLATYTKEDAFNQEAAVGFIEIYGLPTEVNSMLHGGYSNEQ.

8–16 (AYSGGLDTS) is a binding site for ATP. Tyr-85 is an L-citrulline binding site. Position 115 (Gly-115) interacts with ATP. Positions 117, 121, and 122 each coordinate L-aspartate. An L-citrulline-binding site is contributed by Asn-121. L-citrulline is bound by residues Arg-125, Ser-173, Glu-258, and Tyr-270.

This sequence belongs to the argininosuccinate synthase family. Type 1 subfamily. In terms of assembly, homotetramer.

It localises to the cytoplasm. It catalyses the reaction L-citrulline + L-aspartate + ATP = 2-(N(omega)-L-arginino)succinate + AMP + diphosphate + H(+). Its pathway is amino-acid biosynthesis; L-arginine biosynthesis; L-arginine from L-ornithine and carbamoyl phosphate: step 2/3. The chain is Argininosuccinate synthase from Staphylococcus carnosus (strain TM300).